We begin with the raw amino-acid sequence, 425 residues long: Polyribonucleotide 5'-hydroxyl-kinase Clp1 (425 aa).

Residues E22, K62, and 124-129 (DVGKST) each bind ATP.

It belongs to the Clp1 family. Clp1 subfamily. Component of the tRNA splicing endonuclease complex, composed of CLP1, TSEN2, TSEN15, TSEN34 and TSEN54. Component of pre-mRNA cleavage complex II (CF-II). Also associates with numerous components of the pre-mRNA cleavage complex I (CF-I/CFIm), including NUDT21, CPSF2, CPSF3, CPSF6 and CPSF7. Interacts with CSTF2 and SYMPK. Requires Mg(2+) as cofactor. The cofactor is Mn(2+). Ni(2+) is required as a cofactor.

Its subcellular location is the nucleus. It carries out the reaction a 5'-end dephospho-2'-deoxyribonucleoside-DNA + ATP = a 5'-end 5'-phospho-2'-deoxyribonucleoside-DNA + ADP + H(+). The catalysed reaction is a 5'-end dephospho-ribonucleoside-RNA + ATP = a 5'-end 5'-phospho-ribonucleoside-RNA + ADP + H(+). Polynucleotide kinase that can phosphorylate the 5'-hydroxyl groups of double-stranded RNA (dsRNA), single-stranded RNA (ssRNA), double-stranded DNA (dsDNA) and double-stranded DNA:RNA hybrids. dsRNA is phosphorylated more efficiently than dsDNA, and the RNA component of a DNA:RNA hybrid is phosphorylated more efficiently than the DNA component. Plays a key role in both tRNA splicing and mRNA 3'-end formation. Component of the tRNA splicing endonuclease complex: phosphorylates the 5'-terminus of the tRNA 3'-exon during tRNA splicing; this phosphorylation event is a prerequisite for the subsequent ligation of the two exon halves and the production of a mature tRNA. Its role in tRNA splicing and maturation is required for cerebellar development. Component of the pre-mRNA cleavage complex II (CF-II), which seems to be required for mRNA 3'-end formation. Also phosphorylates the 5'-terminus of exogenously introduced short interfering RNAs (siRNAs), which is a necessary prerequisite for their incorporation into the RNA-induced silencing complex (RISC). However, endogenous siRNAs and microRNAs (miRNAs) that are produced by the cleavage of dsRNA precursors by DICER1 already contain a 5'-phosphate group, so this protein may be dispensible for normal RNA-mediated gene silencing. The chain is Polyribonucleotide 5'-hydroxyl-kinase Clp1 from Homo sapiens (Human).